We begin with the raw amino-acid sequence, 556 residues long: Cytochrome P450 4g1 (556 aa).

Heme-binding residues include glutamate 356 and cysteine 497.

The protein belongs to the cytochrome P450 family. Requires heme as cofactor.

It is found in the endoplasmic reticulum membrane. The protein resides in the microsome membrane. In terms of biological role, may be involved in the metabolism of insect hormones and in the breakdown of synthetic insecticides. The chain is Cytochrome P450 4g1 (Cyp4g1) from Drosophila melanogaster (Fruit fly).